The following is a 187-amino-acid chain: Elongation factor P (187 aa).

This sequence belongs to the elongation factor P family.

Its subcellular location is the cytoplasm. It functions in the pathway protein biosynthesis; polypeptide chain elongation. Involved in peptide bond synthesis. Stimulates efficient translation and peptide-bond synthesis on native or reconstituted 70S ribosomes in vitro. Probably functions indirectly by altering the affinity of the ribosome for aminoacyl-tRNA, thus increasing their reactivity as acceptors for peptidyl transferase. The protein is Elongation factor P (efp) of Synechocystis sp. (strain ATCC 27184 / PCC 6803 / Kazusa).